Consider the following 557-residue polypeptide: IgE-binding protein (557 aa).

The disordered stretch occupies residues 113–172 (DGLGKPALSSSEAGEESSSEETDWEEEAAHYQPANWSRKKPKAAGEGQFADWPQGSRLQG). Positions 125–138 (AGEESSSEETDWEE) are enriched in acidic residues. Positions 344 to 534 (TAIRPGRRSR…TAAERHVQSQ (191 aa)) constitute an Integrase catalytic domain.

This is IgE-binding protein (Iap) from Mus musculus (Mouse).